Reading from the N-terminus, the 259-residue chain is Adenosylcobinamide-GDP ribazoletransferase (259 aa).

The next 7 helical transmembrane spans lie at 36-56, 65-85, 108-128, 133-153, 175-195, 201-221, and 238-258; these read FSPL…ILLL, MPFI…VDGL, IGAS…AALF, LILF…IWAI, GFLI…FILI, IIST…ALII, and GASV…ILPA.

Belongs to the CobS family. The cofactor is Mg(2+).

The protein resides in the cell inner membrane. The catalysed reaction is alpha-ribazole + adenosylcob(III)inamide-GDP = adenosylcob(III)alamin + GMP + H(+). It carries out the reaction alpha-ribazole 5'-phosphate + adenosylcob(III)inamide-GDP = adenosylcob(III)alamin 5'-phosphate + GMP + H(+). Its pathway is cofactor biosynthesis; adenosylcobalamin biosynthesis; adenosylcobalamin from cob(II)yrinate a,c-diamide: step 7/7. In terms of biological role, joins adenosylcobinamide-GDP and alpha-ribazole to generate adenosylcobalamin (Ado-cobalamin). Also synthesizes adenosylcobalamin 5'-phosphate from adenosylcobinamide-GDP and alpha-ribazole 5'-phosphate. The sequence is that of Adenosylcobinamide-GDP ribazoletransferase from Prochlorococcus marinus (strain SARG / CCMP1375 / SS120).